A 287-amino-acid polypeptide reads, in one-letter code: Putative esterase/lipase HI_0193 (287 aa).

The region spanning 47–273 is the AB hydrolase-1 domain; it reads PVLIFIHGLF…SGHWVHAEKP (227 aa). Residues Ser-119 and His-266 contribute to the active site.

Belongs to the DmpD/TodF/XylF esterase family.

This is Putative esterase/lipase HI_0193 from Haemophilus influenzae (strain ATCC 51907 / DSM 11121 / KW20 / Rd).